The primary structure comprises 682 residues: Glutamine--fructose-6-phosphate aminotransferase [isomerizing] 2 (682 aa).

The For GATase activity role is filled by cysteine 2. Residues 2-288 (CGIFAYMNYR…DDDIAAVADG (287 aa)) enclose the Glutamine amidotransferase type-2 domain. Phosphoserine is present on serine 244. SIS domains follow at residues 360 to 499 (HLKE…DRIS) and 531 to 672 (LALE…VDFP). Residues 377–378 (TS), 422–424 (SQS), threonine 427, and histidine 578 each bind substrate.

In terms of tissue distribution, highest levels of expression in heart, placenta, and spinal cord.

The enzyme catalyses D-fructose 6-phosphate + L-glutamine = D-glucosamine 6-phosphate + L-glutamate. Its pathway is nucleotide-sugar biosynthesis; UDP-N-acetyl-alpha-D-glucosamine biosynthesis; alpha-D-glucosamine 6-phosphate from D-fructose 6-phosphate: step 1/1. Its function is as follows. Controls the flux of glucose into the hexosamine pathway. Most likely involved in regulating the availability of precursors for N- and O-linked glycosylation of proteins. The protein is Glutamine--fructose-6-phosphate aminotransferase [isomerizing] 2 (GFPT2) of Homo sapiens (Human).